The chain runs to 182 residues: ATP synthase subunit b, chloroplastic (182 aa).

A helical transmembrane segment spans residues 33-51 (VLNIAILLSGVIYLGRNFL).

The protein belongs to the ATPase B chain family. F-type ATPases have 2 components, F(1) - the catalytic core - and F(0) - the membrane proton channel. F(1) has five subunits: alpha(3), beta(3), gamma(1), delta(1), epsilon(1). F(0) has four main subunits: a(1), b(1), b'(1) and c(10-14). The alpha and beta chains form an alternating ring which encloses part of the gamma chain. F(1) is attached to F(0) by a central stalk formed by the gamma and epsilon chains, while a peripheral stalk is formed by the delta, b and b' chains.

It is found in the plastid. The protein resides in the chloroplast thylakoid membrane. Functionally, f(1)F(0) ATP synthase produces ATP from ADP in the presence of a proton or sodium gradient. F-type ATPases consist of two structural domains, F(1) containing the extramembraneous catalytic core and F(0) containing the membrane proton channel, linked together by a central stalk and a peripheral stalk. During catalysis, ATP synthesis in the catalytic domain of F(1) is coupled via a rotary mechanism of the central stalk subunits to proton translocation. In terms of biological role, component of the F(0) channel, it forms part of the peripheral stalk, linking F(1) to F(0). This Guillardia theta (Cryptophyte) protein is ATP synthase subunit b, chloroplastic.